A 429-amino-acid chain; its full sequence is Keratin, type I cytoskeletal 18 (429 aa).

A head region spans residues S2–N78. The segment at E79–H114 is coil 1A. The region spanning E79 to D389 is the IF rod domain. Residues T115–T130 are linker 1. A coil 1B region spans residues I131–L222. A linker 12 region spans residues Q223–I246. The segment at M247–D385 is coil 2. The segment at G386–S429 is tail.

The protein belongs to the intermediate filament family. Heterotetramer of two type I and two type II keratins. Keratin-18 associates with keratin-8. Post-translationally, phosphorylated. In terms of processing, proteolytically cleaved by caspases during epithelial cell apoptosis.

When phosphorylated, plays a role in filament reorganization. This Xenopus tropicalis (Western clawed frog) protein is Keratin, type I cytoskeletal 18.